The chain runs to 127 residues: MAAATTTGTHRGLELRAAQRAVGSCEPQRAEFCRSARNADEFDQMSRMFGDVYPDVPVPKSVWRWIDSAQHRLARAGAVGALSVVDLLICDTAAARGLVVLHDDADYELAERHLPDIRVRRVVSADD.

Positions 26 to 120 (EPQRAEFCRS…ERHLPDIRVR (95 aa)) constitute a PINc domain. D86 serves as a coordination point for Mg(2+).

Belongs to the PINc/VapC protein family. Requires Mg(2+) as cofactor.

Toxic component of a type II toxin-antitoxin (TA) system. An RNase. The cognate antitoxin is VapB6. This chain is Ribonuclease VapC6, found in Mycobacterium tuberculosis (strain CDC 1551 / Oshkosh).